Consider the following 251-residue polypeptide: MNEAVKTLDGWFCLHDFRSIDWAAWRELNPANQELMLNELSHFLSDMEITKNIGEGEHTIYSILGQKADLVFFTLRDSLEALNEVENRFNKLAIADYLLPTYSYISVVELSNYLASHMAGGEDPYQNKGVRARLYPALPPKKHICFYPMSKKRDGADNWYMLPMDERQKLIRDHGLIGRSYAGKVQQIIGGSIGFDDYEWGVTLFSDDALEFKRIVTEMRFDEASARYAEFGSFFIGNLLPSENLSKLFTM.

Fe-coproporphyrin III is bound by residues Arg-133, 147–151, His-174, Gln-187, and Ser-225; that span reads YPMSK. Tyr-147 is an active-site residue.

This sequence belongs to the ChdC family. Type 1 subfamily. Fe-coproporphyrin III is required as a cofactor.

The catalysed reaction is Fe-coproporphyrin III + 2 H2O2 + 2 H(+) = heme b + 2 CO2 + 4 H2O. It catalyses the reaction Fe-coproporphyrin III + H2O2 + H(+) = harderoheme III + CO2 + 2 H2O. It carries out the reaction harderoheme III + H2O2 + H(+) = heme b + CO2 + 2 H2O. It participates in porphyrin-containing compound metabolism; protoheme biosynthesis. In terms of biological role, involved in coproporphyrin-dependent heme b biosynthesis. Catalyzes the decarboxylation of Fe-coproporphyrin III (coproheme) to heme b (protoheme IX), the last step of the pathway. The reaction occurs in a stepwise manner with a three-propionate intermediate. The chain is Coproheme decarboxylase from Listeria welshimeri serovar 6b (strain ATCC 35897 / DSM 20650 / CCUG 15529 / CIP 8149 / NCTC 11857 / SLCC 5334 / V8).